The following is a 2291-amino-acid chain: MTTDISIVRWDPSQGPGNEYIDEYEYDGGNSSSRLFERSRIKALAEERESVQKKTFTKWVNSHLCRVNCRIADLYVDMRDGKHLIKLLEVLSGERLPKPTKGKMRIHCLENVDKALQFLREQRVHLENIGSHDIVDGNASLNLGLIWTIILRFQIQDITIEEVDNKETKSAKDALLLWCQMKTAGYHNVNVRNFTTSWRDGLAFNAIIHKHRPDLVQFEKLSKTNAIHNLNNAFDVAEDKLGLAKLLDAEDVFVEHPDEKSIITYVVTYYHYFSKLKQETVQGKRIGKVVGIAMENDKMVHDYENFTSDLLKWIETTIQSLGEREFENSLAGVQGQLAQFSNYRTIEKPPKFVEKGNLEVLLFTLQSKMRANNQKPYTPKEGKMISDINKAWERLEKAEHERELALREELIRQEKLEQLAARFDRKASMRETWLSENQRLVSQDNFGFDLAAVEAAAKKHEAIETDIFAYEERVQAVVAVCDELESERYHDVKRILLRKDNVMRLWTYLLELLRARRMRLEISLQLQQNFQEMLYILDNMEEIKQLLMTDDYGKHLMGVEDLLQKHSLVEADINILGERVKVVVQNSQKFLSDDPESYKPCDPEIIVSRVQQLEDAYAELVRLAVERRSRLEESRKLWQFYWDTADEENWIKEKEQIVSTDEVGHDLTTVNLMLSKHKALESEITSHDPQLQNVAKVGSELITEGHFGADRIKDRLKEILNKWDHLLDLTKYRRQRLENAVEYFQLFADADDVDNWMLDTLRIVSSEDVGRDEANVQSLLKKHKDVADELKNYAEVIDALHKQAESLKLNEAEKANVDKRLEAIDNRYKELTELAKLRKQRLLDALSLYKLMSEADGVEQWIKEKTKMLDTMTPGKDIEDVEIMKHRFEGFDKEMNANASRVAVVNQLARQLLHVEHPNSDEILERQNHLNQEWSTLREKAEAKMDDLKSAHGVQTFYIECRETISWIEDKKRILTETDSLEMDLTGVMTLQRRLSGMDRDLAAIQAKLSSLEREANSIEDEHPEEAKIIRERIAQIELIWEQLTQMLKERDSKLEEAGDLHRFLRDLDHFQTWLTKTQTDVASEDTPTSLPEAEKLLNQHQSIREEIDNYTEDYKNMMEYGERLTSEGSTSDDPQYMFLRERLNALKDGWEELHQMWENRQVLLSQSLDQQLFNRDARQTEVLLSQQEHFLSKDDTPVNLEQAENQLKRHEAFLTTMEANDDKINTLLQVADTLVEKDHFDADKIGKRAENITGRRDDNRQRALDQHEKLKNQVKLHEFLQDLEELAEWVQEKYATSQDESYRSAKTIHSKWTRHQAFEAEIAANKERLFEAEKSAQELSKEKPEFKDVIEPKLKELAKQFDDLEVHTKEKGAMLFDANREVLVQQTCDDIDSYITDLEKQIVSGDTANDLTSVNILMQKQQVIQTQMAVKARQVEEIDKQTEYLQKTVPEEKIEPIVVKKTAVLERFEKIKAPLLERQKALEKKKEAFQFCRDVEDEKLWIDEKLPVANSPDYGNSLFNVHVLKKKNQSLATEIDNHEPRINAICNNGRKLIDEGHEDAKKFEALISDLTQKWQELKDAIENRRKHLLESEKVQQYFFDAQEAESWMSEQELYMMVEDRGKDEISAQNLMKKHENLEQSVEDYANTIRQLGEVARQFSGDDISSGDAVAVKQSQLDKLYAGLKDLAGERRARLNEALQLFMLSREVDDLEQWITDREVVAGSQELGQDFDHVTLLSERFNEFARDTEAVGGERVAKVNGIADNLIQAGHSDSATIAEWKDNLNESWQDLLELIETRTQMLAASRELHKFFHDCKDVLGRILEKQHGVSDELGRDAGSVSTLQRKHYNFLQDLITLYSQVQQIQEESAKLQDAYAGDKAKEITNREQEVLHAWDNLQAMCDARKQKLADTGDLFRFFNMVRILMIWMEDLVRQMNTSEKPRDVSGVELLMNNHQSLKAEIDTREDNFGACISLGKELLTRNHYASADIKDRLMTLSNSRNALLRRWEERWENLQLILEVYQFARDAAVAEAWLIAQEPYLLSSELGHTIDEVENLIKKHEAFEKSAAAQEERFSALERLTTFELKEMKRRQELAEEAERQRIKEEQEAKAASEAAEQAKREAERRDDVDVGASHDDSERGGTPGAGEGHEGYVTRKHEWDSTTKKASNRSWDKVYMAAKAGRISFYKDQKGYKSNPELTFRGEPSYDLQNAAIEIASDYTKKKHVLRVKLANGALFLLQAHDDTEMSQWVTSLKAQSDSTAVAASRSQTLPATSQKDEPKRRSFFTLKKK.

Residues 1 to 271 (MTTDISIVRW…IITYVVTYYH (271 aa)) form an actin-binding region. 2 Calponin-homology (CH) domains span residues 50-154 (SVQK…LRFQ) and 169-274 (KSAK…HYFS). 17 Spectrin repeats span residues 300-408 (VHDY…ALRE), 420-521 (AARF…MRLE), 525-633 (QLQQ…RLEE), 636-739 (KLWQ…RLEN), 743-843 (YFQL…QRLL), 848-948 (LYKL…MDDL), 954-1057 (VQTF…KLEE), 1060-1166 (DLHR…VLLS), 1170-1272 (DQQL…EKLK), 1276-1376 (KLHE…GAML), 1386-1484 (QQTC…KALE), 1488-1591 (EAFQ…HLLE), 1594-1697 (KVQQ…RLNE), 1701-1802 (LFML…TQML), 1807-1909 (ELHK…QKLA), 1913-2015 (DLFR…ENLQ), and 2020-2089 (VYQF…KEMK). Basic and acidic residues predominate over residues 2097-2140 (EAERQRIKEEQEAKAASEAAEQAKREAERRDDVDVGASHDDSER). A disordered region spans residues 2097-2152 (EAERQRIKEEQEAKAASEAAEQAKREAERRDDVDVGASHDDSERGGTPGAGEGHEG). A PH domain is found at 2147–2259 (GEGHEGYVTR…WVTSLKAQSD (113 aa)). S2195 carries the phosphoserine modification. The span at 2262 to 2275 (AVAASRSQTLPATS) shows a compositional bias: polar residues. Positions 2262 to 2291 (AVAASRSQTLPATSQKDEPKRRSFFTLKKK) are disordered.

Belongs to the spectrin family. Native spectrin molecule is a tetramer composed of two antiparallel heterodimers joined head to head so that each end of the native molecule includes the C-terminus of the alpha subunit and the N-terminus of the beta subunit.

It is found in the cytoplasm. The protein localises to the cytoskeleton. It localises to the cell cortex. Spectrin is the major constituent of the cytoskeletal network underlying the erythrocyte plasma membrane. It associates with band 4.1 and actin to form the cytoskeletal superstructure of the erythrocyte plasma membrane. Interacts with calmodulin in a calcium-dependent manner. The polypeptide is Spectrin beta chain (beta-Spec) (Drosophila melanogaster (Fruit fly)).